Here is a 367-residue protein sequence, read N- to C-terminus: DNA replication and repair protein RecF (367 aa).

31–38 (GENGSGKT) lines the ATP pocket.

This sequence belongs to the RecF family.

The protein localises to the cytoplasm. Functionally, the RecF protein is involved in DNA metabolism; it is required for DNA replication and normal SOS inducibility. RecF binds preferentially to single-stranded, linear DNA. It also seems to bind ATP. The polypeptide is DNA replication and repair protein RecF (Saccharophagus degradans (strain 2-40 / ATCC 43961 / DSM 17024)).